Reading from the N-terminus, the 201-residue chain is Large ribosomal subunit protein eL15B (201 aa).

The segment at 161–182 (SRGLTSIGKKSRGIGKGHRYNN) is disordered. Over residues 169-179 (KKSRGIGKGHR) the composition is skewed to basic residues. Serine 183 is subject to Phosphoserine.

The protein belongs to the eukaryotic ribosomal protein eL15 family. As to quaternary structure, component of the large ribosomal subunit (LSU). Mature yeast ribosomes consist of a small (40S) and a large (60S) subunit. The 40S small subunit contains 1 molecule of ribosomal RNA (18S rRNA) and at least 33 different proteins. The large 60S subunit contains 3 rRNA molecules (25S, 5.8S and 5S rRNA) and at least 46 different proteins.

It is found in the cytoplasm. Its subcellular location is the nucleus. The protein localises to the nucleolus. Its function is as follows. Component of the ribosome, a large ribonucleoprotein complex responsible for the synthesis of proteins in the cell. The small ribosomal subunit (SSU) binds messenger RNAs (mRNAs) and translates the encoded message by selecting cognate aminoacyl-transfer RNA (tRNA) molecules. The large subunit (LSU) contains the ribosomal catalytic site termed the peptidyl transferase center (PTC), which catalyzes the formation of peptide bonds, thereby polymerizing the amino acids delivered by tRNAs into a polypeptide chain. The nascent polypeptides leave the ribosome through a tunnel in the LSU and interact with protein factors that function in enzymatic processing, targeting, and the membrane insertion of nascent chains at the exit of the ribosomal tunnel. The chain is Large ribosomal subunit protein eL15B (rpl1502) from Schizosaccharomyces pombe (strain 972 / ATCC 24843) (Fission yeast).